A 2214-amino-acid chain; its full sequence is Multifunctional protein URA2 (2214 aa).

Residue Ala2 is modified to N-acetylalanine. Residues 2–400 (ATIAPTAPIT…PGPRDTEFLF (399 aa)) are GATase (Glutamine amidotransferase). L-glutamine contacts are provided by Ser64, Gly273, and Gly275. The Glutamine amidotransferase type-1 domain occupies 228–413 (RILAIDVGMK…IQAVKEFKYT (186 aa)). Cys302 serves as the catalytic Nucleophile; for GATase activity. The L-glutamine site is built by Leu303, Gln306, Asn344, Gly346, and Phe347. Catalysis depends on for GATase activity residues His386 and Glu388. A linker region spans residues 401–440 (DVFIQAVKEFKYTQVLKPIAFPGGLLEDNVKAHPRIEAKK). The interval 440 to 980 (KVLVLGSGGL…DSHDLSFDDH (541 aa)) is CPSase A. A CPSase (Carbamoyl phosphate synthase) region spans residues 440–1482 (KVLVLGSGGL…TNVKCAKLLI (1043 aa)). Positions 558, 598, 604, 605, 635, 637, 642, 668, 669, 670, 711, and 725 each coordinate ATP. ATP-grasp domains follow at residues 562–754 (SNAI…KLGL) and 1099–1290 (SRML…KAIM). Gln711, Glu725, and Asn727 together coordinate Mg(2+). Mn(2+)-binding residues include Gln711, Glu725, and Asn727. Residues 981–1482 (GVMVLGSGVY…TNVKCAKLLI (502 aa)) form a CPSase B region. Residues Arg1135, Lys1174, Ile1176, Glu1181, Gly1206, Val1207, His1208, Ser1209, Gln1249, and Glu1261 each contribute to the ATP site. 3 residues coordinate Mg(2+): Gln1249, Glu1261, and Asn1263. Mn(2+) contacts are provided by Gln1249, Glu1261, and Asn1263. An MGS-like domain is found at 1356–1508 (FKLPKKNILL…QTSHRTITLP (153 aa)). The interval 1483-1492 (EAISRNITLD) is linker. Residues 1493–1821 (VSERDAQTSH…YNGETLVLSG (329 aa)) form a defective DHOase domain region. Residues 1822 to 1909 (ELVSPGAKGK…NLIRSNNPFR (88 aa)) form a linker region. A Glycyl lysine isopeptide (Lys-Gly) (interchain with G-Cter in ubiquitin) cross-link involves residue Lys1853. The residue at position 1857 (Ser1857) is a Phosphoserine; by PKA. Positions 1910–2214 (GRHILSIKQF…LLAMVMGVDM (305 aa)) are ATCase (Aspartate transcarbamylase). 2 residues coordinate carbamoyl phosphate: Arg1962 and Thr1963. Lys1990 serves as a coordination point for L-aspartate. Arg2011, His2039, and Gln2042 together coordinate carbamoyl phosphate. Positions 2072 and 2134 each coordinate L-aspartate. The carbamoyl phosphate site is built by Leu2173 and Pro2174.

This sequence in the N-terminal section; belongs to the CarA family. The protein in the 2nd section; belongs to the CarB family. It in the 3rd section; belongs to the metallo-dependent hydrolases superfamily. DHOase family. CAD subfamily. In the C-terminal section; belongs to the aspartate/ornithine carbamoyltransferase superfamily. ATCase family. It depends on Mg(2+) as a cofactor. Mn(2+) is required as a cofactor.

Its subcellular location is the cytoplasm. It carries out the reaction hydrogencarbonate + L-glutamine + 2 ATP + H2O = carbamoyl phosphate + L-glutamate + 2 ADP + phosphate + 2 H(+). The enzyme catalyses L-glutamine + H2O = L-glutamate + NH4(+). It catalyses the reaction hydrogencarbonate + NH4(+) + 2 ATP = carbamoyl phosphate + 2 ADP + phosphate + 2 H(+). The catalysed reaction is carbamoyl phosphate + L-aspartate = N-carbamoyl-L-aspartate + phosphate + H(+). The protein operates within pyrimidine metabolism; UMP biosynthesis via de novo pathway; (S)-dihydroorotate from bicarbonate: step 1/3. It participates in pyrimidine metabolism; UMP biosynthesis via de novo pathway; (S)-dihydroorotate from bicarbonate: step 2/3. Both CPSase and ATCase activities are feedback inhibited by the end product UTP. Functionally, multifunctional protein that encodes the first 2 enzymatic activities of the de novo pyrimidine pathway: carbamoylphosphate synthetase (CPSase; EC 6.3.5.5) and aspartate transcarbamylase (ATCase; EC 2.1.3.2). The CPSase-function is accomplished in 2 steps, by a glutamine-dependent amidotransferase activity (GATase) that binds and cleaves glutamine to produce ammonia, followed by an ammonium-dependent carbamoyl phosphate synthetase, which reacts with the ammonia, hydrogencarbonate and ATP to form carbamoyl phosphate. The endogenously produced carbamoyl phosphate is sequestered and channeled to the ATCase active site. ATCase then catalyzes the formation of carbamoyl-L-aspartate from L-aspartate and carbamoyl phosphate. The protein is Multifunctional protein URA2 (URA2) of Saccharomyces cerevisiae (strain ATCC 204508 / S288c) (Baker's yeast).